Here is a 280-residue protein sequence, read N- to C-terminus: UDP-2,3-diacylglucosamine pyrophosphatase LpxI (280 aa).

Residues Ala12, 74–75 (NV), Gln169, 187–188 (TD), Lys214, and 226–233 (LPTIGVAT) each bind substrate.

The protein belongs to the LpxI family. Homodimer. Mg(2+) serves as cofactor.

The protein resides in the cell inner membrane. It catalyses the reaction UDP-2-N,3-O-bis[(3R)-3-hydroxytetradecanoyl]-alpha-D-glucosamine + H2O = 2-N,3-O-bis[(3R)-3-hydroxytetradecanoyl]-alpha-D-glucosaminyl 1-phosphate + UMP + 2 H(+). The protein operates within glycolipid biosynthesis; lipid IV(A) biosynthesis; lipid IV(A) from (3R)-3-hydroxytetradecanoyl-[acyl-carrier-protein] and UDP-N-acetyl-alpha-D-glucosamine: step 4/6. Inhibited by high concentrations of Cu(2+) and Zn(2+). Completely inhibited by EDTA in vitro. Its function is as follows. Hydrolyzes the pyrophosphate bond of UDP-2,3-diacylglucosamine to form 2,3-diacylglucosamine 1-phosphate (lipid X) and UMP by catalyzing the attack of water at the beta-P atom. Involved in the biosynthesis of lipid A, a phosphorylated glycolipid that anchors the lipopolysaccharide to the outer membrane of the cell. Can functionally complement lpxH deficiency in E.coli. Cannot use CDP-diacylglycerol as substrate. This is UDP-2,3-diacylglucosamine pyrophosphatase LpxI from Caulobacter vibrioides (strain ATCC 19089 / CIP 103742 / CB 15) (Caulobacter crescentus).